Consider the following 427-residue polypeptide: Extracellular superoxide dismutase [Cu-Zn] 2 (427 aa).

The first 20 residues, 1–20, serve as a signal peptide directing secretion; that stretch reads MNKLIISLLIVLSAISIISA. Residues 21–406 lie on the Extracellular side of the membrane; the sequence is DYQYGYCKFG…PTETSQPGTS (386 aa). N-linked (GlcNAc...) asparagine glycosylation is found at N38, N57, N81, N190, and N218. Cu cation is bound by residues H257, H259, and H275. The Zn(2+) site is built by H275 and H283. N-linked (GlcNAc...) asparagine glycosylation occurs at N288. 2 residues coordinate Zn(2+): H292 and D295. H331 is a binding site for Cu cation. N376 carries N-linked (GlcNAc...) asparagine glycosylation. Positions 381 to 404 are disordered; that stretch reads GESTIEPSPTPSTTPTPTETSQPG. Over residues 395–404 the composition is skewed to low complexity; sequence PTPTETSQPG. A helical transmembrane segment spans residues 407–426; it reads SYLAPFFVLILSSLISVILI. L427 is a topological domain (cytoplasmic).

Belongs to the Cu-Zn superoxide dismutase family. Cu cation serves as cofactor. The cofactor is Zn(2+).

It is found in the cell membrane. The enzyme catalyses 2 superoxide + 2 H(+) = H2O2 + O2. Protect the extracellular space from toxic effect of reactive oxygen intermediates by converting superoxyde radicals into hydrogen peroxyde and oxygen. This Dictyostelium discoideum (Social amoeba) protein is Extracellular superoxide dismutase [Cu-Zn] 2 (sodB).